The following is a 1975-amino-acid chain: Cadherin-87A (1975 aa).

A signal peptide spans 1–17; that stretch reads MKLPLGLLMICLGLTLA. The Extracellular portion of the chain corresponds to 18 to 1775; it reads KGETNLPPVF…AIVQDEFDLA (1758 aa). Cadherin domains follow at residues 28–132, 133–245, 246–358, 359–472, 473–669, 670–774, 775–878, 879–998, 999–1103, 1104–1211, 1212–1318, 1319–1431, 1432–1553, and 1554–1677; these read TQTL…PPEF, QNTP…PPVF, QGSL…PPVF, NHKE…KPVF, EQES…PPVC, ESPL…VPNF, EQQS…DPYF, VPAT…PPRF, NAPW…DPKF, SQSD…APVF, TRDV…KPEF, VIPA…RPEF, PDAS…PPVF, and EKPI…PPEE. Asparagine 39, asparagine 77, and asparagine 203 each carry an N-linked (GlcNAc...) asparagine glycan. N-linked (GlcNAc...) asparagine glycosylation occurs at asparagine 424. Residues 535-560 are disordered; it reads CHDNGESNRRERRDLNEDEHVEEDDG. Over residues 537-549 the composition is skewed to basic and acidic residues; it reads DNGESNRRERRDL. The segment covering 550 to 560 has biased composition (acidic residues); sequence NEDEHVEEDDG. 2 N-linked (GlcNAc...) asparagine glycosylation sites follow: asparagine 730 and asparagine 761. N-linked (GlcNAc...) asparagine glycans are attached at residues asparagine 1039, asparagine 1049, asparagine 1111, asparagine 1163, asparagine 1217, asparagine 1325, asparagine 1349, asparagine 1492, asparagine 1576, and asparagine 1691. Residues 1776–1796 form a helical membrane-spanning segment; it reads VAGLVALVIVLFVGVISFIVL. Residues 1797–1975 are Cytoplasmic-facing; the sequence is CCCLKHWNLS…DGDDAVAELI (179 aa). The segment covering 1887–1899 has biased composition (polar residues); the sequence is YATIQPRNNQNRL. A disordered region spans residues 1887 to 1916; the sequence is YATIQPRNNQNRLTGGGGAGGGSMRSGGGA. The span at 1900-1916 shows a compositional bias: gly residues; sequence TGGGGAGGGSMRSGGGA.

It is found in the cell membrane. Its function is as follows. Cadherins are calcium-dependent cell adhesion proteins. They preferentially interact with themselves in a homophilic manner in connecting cells. This is Cadherin-87A (Cad87A) from Drosophila melanogaster (Fruit fly).